We begin with the raw amino-acid sequence, 522 residues long: O-fucosyltransferase 38 (522 aa).

Residues 26–46 traverse the membrane as a helical; Signal-anchor for type II membrane protein segment; it reads AISLYLIFVFAFTIWVLVFSS. Basic and acidic residues predominate over residues 54-67; that stretch reads DHTKHQQQHHRDLI. Positions 54–73 are disordered; that stretch reads DHTKHQQQHHRDLIDSESFP. A glycan (N-linked (GlcNAc...) asparagine) is linked at Asn-147. 284-286 serves as a coordination point for substrate; that stretch reads HLR. Residue Asn-325 is glycosylated (N-linked (GlcNAc...) asparagine). Residues 475–496 are disordered; the sequence is HKDRQGAPRRRKGPTQGIKGRA.

It belongs to the glycosyltransferase GT106 family.

It localises to the membrane. It participates in glycan metabolism. The sequence is that of O-fucosyltransferase 38 from Arabidopsis thaliana (Mouse-ear cress).